A 158-amino-acid polypeptide reads, in one-letter code: Cytochrome c-type biogenesis protein CcmE (158 aa).

At 1–8 (MNIRRRRR) the chain is on the cytoplasmic side. The helical; Signal-anchor for type II membrane protein transmembrane segment at 9 to 29 (LLVVVAILVGLGLATGLVMYA) threads the bilayer. Residues 30 to 158 (LRSNIDLFYT…GLLNVSEPTR (129 aa)) are Periplasmic-facing. Heme is bound by residues histidine 130 and tyrosine 134.

The protein belongs to the CcmE/CycJ family.

It localises to the cell inner membrane. In terms of biological role, heme chaperone required for the biogenesis of c-type cytochromes. Transiently binds heme delivered by CcmC and transfers the heme to apo-cytochromes in a process facilitated by CcmF and CcmH. In Tatumella citrea (Pantoea citrea), this protein is Cytochrome c-type biogenesis protein CcmE.